The sequence spans 126 residues: Large ribosomal subunit protein bL21 (126 aa).

The segment at 105–126 (KKPSVGPRAKRTKAAPAAEAAE) is disordered.

Contacts protein L20. Part of the 50S ribosomal subunit.

This protein binds to 23S rRNA in the presence of protein L20. The sequence is that of Large ribosomal subunit protein bL21 from Rhodopseudomonas palustris (strain ATCC BAA-98 / CGA009).